The following is a 159-amino-acid chain: Small ribosomal subunit protein uS4 (159 aa).

An S4 RNA-binding domain is found at 106–158 (RRLQTIVYRMGLAKSIYHARQLIVHGHIAIEGRRVTSPGFLVPRELEDKITLV).

Belongs to the universal ribosomal protein uS4 family. As to quaternary structure, part of the 30S ribosomal subunit. Contacts protein S5. The interaction surface between S4 and S5 is involved in control of translational fidelity.

Functionally, one of the primary rRNA binding proteins, it binds directly to 16S rRNA where it nucleates assembly of the body of the 30S subunit. In terms of biological role, with S5 and S12 plays an important role in translational accuracy. This Pyrobaculum arsenaticum (strain DSM 13514 / JCM 11321 / PZ6) protein is Small ribosomal subunit protein uS4.